A 417-amino-acid chain; its full sequence is Tyrosine aminotransferase (417 aa).

N6-(pyridoxal phosphate)lysine is present on Lys-249.

Belongs to the class-I pyridoxal-phosphate-dependent aminotransferase family. Homodimer. Pyridoxal 5'-phosphate serves as cofactor.

It carries out the reaction L-tyrosine + 2-oxoglutarate = 3-(4-hydroxyphenyl)pyruvate + L-glutamate. Its pathway is amino-acid degradation; L-phenylalanine degradation; acetoacetate and fumarate from L-phenylalanine: step 2/6. Functionally, transaminase involved in tyrosine breakdown. Converts tyrosine to p-hydroxyphenylpyruvate. Has much lower affinity and transaminase activity towards phenylalanine. This chain is Tyrosine aminotransferase (tat), found in Dictyostelium discoideum (Social amoeba).